A 169-amino-acid chain; its full sequence is ATP synthase subunit b (169 aa).

The helical transmembrane segment at 14–34 (TFLAMLISFLILVFILQQVAF) threads the bilayer.

This sequence belongs to the ATPase B chain family. As to quaternary structure, F-type ATPases have 2 components, F(1) - the catalytic core - and F(0) - the membrane proton channel. F(1) has five subunits: alpha(3), beta(3), gamma(1), delta(1), epsilon(1). F(0) has four main subunits: a(1), b(2) and c(10-14). The alpha and beta chains form an alternating ring which encloses part of the gamma chain. F(1) is attached to F(0) by a central stalk formed by the gamma and epsilon chains, while a peripheral stalk is formed by the delta and b chains.

It is found in the cell membrane. Its function is as follows. F(1)F(0) ATP synthase produces ATP from ADP in the presence of a proton or sodium gradient. F-type ATPases consist of two structural domains, F(1) containing the extramembraneous catalytic core and F(0) containing the membrane proton channel, linked together by a central stalk and a peripheral stalk. During catalysis, ATP synthesis in the catalytic domain of F(1) is coupled via a rotary mechanism of the central stalk subunits to proton translocation. Functionally, component of the F(0) channel, it forms part of the peripheral stalk, linking F(1) to F(0). This is ATP synthase subunit b from Heliobacterium modesticaldum (strain ATCC 51547 / Ice1).